Consider the following 265-residue polypeptide: Hydroxyethylthiazole kinase 2 (265 aa).

A substrate-binding site is contributed by methionine 39. ATP is bound by residues lysine 115 and threonine 168. Residue glycine 195 participates in substrate binding.

This sequence belongs to the Thz kinase family. The cofactor is Mg(2+).

The enzyme catalyses 5-(2-hydroxyethyl)-4-methylthiazole + ATP = 4-methyl-5-(2-phosphooxyethyl)-thiazole + ADP + H(+). The protein operates within cofactor biosynthesis; thiamine diphosphate biosynthesis; 4-methyl-5-(2-phosphoethyl)-thiazole from 5-(2-hydroxyethyl)-4-methylthiazole: step 1/1. Its function is as follows. Catalyzes the phosphorylation of the hydroxyl group of 4-methyl-5-beta-hydroxyethylthiazole (THZ). In Clostridium botulinum (strain Okra / Type B1), this protein is Hydroxyethylthiazole kinase 2.